Here is a 248-residue protein sequence, read N- to C-terminus: Putative TrmH family tRNA/rRNA methyltransferase (248 aa).

Residues Gly-196, Ile-216, and Leu-225 each contribute to the S-adenosyl-L-methionine site.

It belongs to the class IV-like SAM-binding methyltransferase superfamily. RNA methyltransferase TrmH family.

The polypeptide is Putative TrmH family tRNA/rRNA methyltransferase (Staphylococcus aureus (strain COL)).